The sequence spans 305 residues: UDP-3-O-acyl-N-acetylglucosamine deacetylase (305 aa).

His78, His237, and Asp241 together coordinate Zn(2+). The active-site Proton donor is the His264.

The protein belongs to the LpxC family. It depends on Zn(2+) as a cofactor.

It catalyses the reaction a UDP-3-O-[(3R)-3-hydroxyacyl]-N-acetyl-alpha-D-glucosamine + H2O = a UDP-3-O-[(3R)-3-hydroxyacyl]-alpha-D-glucosamine + acetate. Its pathway is glycolipid biosynthesis; lipid IV(A) biosynthesis; lipid IV(A) from (3R)-3-hydroxytetradecanoyl-[acyl-carrier-protein] and UDP-N-acetyl-alpha-D-glucosamine: step 2/6. Catalyzes the hydrolysis of UDP-3-O-myristoyl-N-acetylglucosamine to form UDP-3-O-myristoylglucosamine and acetate, the committed step in lipid A biosynthesis. This is UDP-3-O-acyl-N-acetylglucosamine deacetylase from Cupriavidus pinatubonensis (strain JMP 134 / LMG 1197) (Cupriavidus necator (strain JMP 134)).